Reading from the N-terminus, the 353-residue chain is MLTLSDFDFPLPPELIAQSALPDRSASRLLVVERTAPEDTSEAVRLVDRAFSDILEYLNPDDLLVFNDTRVIKARFFGHKPSGGRIEVLVERVVDTHTVLAQVRASKTPVEGSLLHLADDAFAVTVGPRVDQFFTLRFPEPALDLIERYGRLPLPPYITHDPDAYDETRYQTVYARNPGAVAAPTAGLHFDDALFARLDAAGIRRAFLTLHVGAGTFQPVRTENLSEHKMHSEWYAISPELADAVRETRARGGRVIAVGTTSLRALESAAAEDGTLEAGSGDTDIFITPGYAFRIVDALITNFHLPKSTLLMLVSALAGVEAIRDAYRHAVDARYRFFSYGDAMLLTRRDRRA.

This sequence belongs to the QueA family. As to quaternary structure, monomer.

It localises to the cytoplasm. The enzyme catalyses 7-aminomethyl-7-carbaguanosine(34) in tRNA + S-adenosyl-L-methionine = epoxyqueuosine(34) in tRNA + adenine + L-methionine + 2 H(+). It participates in tRNA modification; tRNA-queuosine biosynthesis. Its function is as follows. Transfers and isomerizes the ribose moiety from AdoMet to the 7-aminomethyl group of 7-deazaguanine (preQ1-tRNA) to give epoxyqueuosine (oQ-tRNA). This Cupriavidus metallidurans (strain ATCC 43123 / DSM 2839 / NBRC 102507 / CH34) (Ralstonia metallidurans) protein is S-adenosylmethionine:tRNA ribosyltransferase-isomerase.